A 314-amino-acid polypeptide reads, in one-letter code: 4-diphosphocytidyl-2-C-methyl-D-erythritol kinase (314 aa).

Lys11 is an active-site residue. Residue 99–109 (PMAAGLAGGST) participates in ATP binding. The active site involves Asp141.

This sequence belongs to the GHMP kinase family. IspE subfamily.

It carries out the reaction 4-CDP-2-C-methyl-D-erythritol + ATP = 4-CDP-2-C-methyl-D-erythritol 2-phosphate + ADP + H(+). The protein operates within isoprenoid biosynthesis; isopentenyl diphosphate biosynthesis via DXP pathway; isopentenyl diphosphate from 1-deoxy-D-xylulose 5-phosphate: step 3/6. Catalyzes the phosphorylation of the position 2 hydroxy group of 4-diphosphocytidyl-2C-methyl-D-erythritol. The chain is 4-diphosphocytidyl-2-C-methyl-D-erythritol kinase from Trichodesmium erythraeum (strain IMS101).